A 178-amino-acid polypeptide reads, in one-letter code: Interleukin-10 (178 aa).

The first 18 residues, 1-18 (MHSSALLCCLVVLTGVRA), serve as a signal peptide directing secretion. 2 disulfides stabilise this stretch: cysteine 30–cysteine 126 and cysteine 80–cysteine 132. A glycan (N-linked (GlcNAc...) asparagine) is linked at asparagine 134.

It belongs to the IL-10 family. As to quaternary structure, homodimer. Interacts with IL10RA and IL10RB.

It is found in the secreted. Functionally, major immune regulatory cytokine that acts on many cells of the immune system where it has profound anti-inflammatory functions, limiting excessive tissue disruption caused by inflammation. Mechanistically, IL10 binds to its heterotetrameric receptor comprising IL10RA and IL10RB leading to JAK1 and STAT2-mediated phosphorylation of STAT3. In turn, STAT3 translocates to the nucleus where it drives expression of anti-inflammatory mediators. Targets antigen-presenting cells (APCs) such as macrophages and monocytes and inhibits their release of pro-inflammatory cytokines including granulocyte-macrophage colony-stimulating factor /GM-CSF, granulocyte colony-stimulating factor/G-CSF, IL-1 alpha, IL-1 beta, IL-6, IL-8 and TNF-alpha. Also interferes with antigen presentation by reducing the expression of MHC-class II and co-stimulatory molecules, thereby inhibiting their ability to induce T cell activation. In addition, controls the inflammatory response of macrophages by reprogramming essential metabolic pathways including mTOR signaling. This chain is Interleukin-10 (IL10), found in Papio hamadryas (Hamadryas baboon).